The chain runs to 469 residues: Argininosuccinate lyase (469 aa).

This sequence belongs to the lyase 1 family. Argininosuccinate lyase subfamily.

It is found in the cytoplasm. It catalyses the reaction 2-(N(omega)-L-arginino)succinate = fumarate + L-arginine. The protein operates within amino-acid biosynthesis; L-arginine biosynthesis; L-arginine from L-ornithine and carbamoyl phosphate: step 3/3. The sequence is that of Argininosuccinate lyase from Novosphingobium aromaticivorans (strain ATCC 700278 / DSM 12444 / CCUG 56034 / CIP 105152 / NBRC 16084 / F199).